Reading from the N-terminus, the 218-residue chain is 7-cyano-7-deazaguanine synthase 1 (218 aa).

9–19 (YSGGMDSFTVL) lines the ATP pocket. Zn(2+)-binding residues include Cys-185, Cys-193, Cys-196, and Cys-199.

The protein belongs to the QueC family. Zn(2+) is required as a cofactor.

The catalysed reaction is 7-carboxy-7-deazaguanine + NH4(+) + ATP = 7-cyano-7-deazaguanine + ADP + phosphate + H2O + H(+). It participates in purine metabolism; 7-cyano-7-deazaguanine biosynthesis. Functionally, catalyzes the ATP-dependent conversion of 7-carboxy-7-deazaguanine (CDG) to 7-cyano-7-deazaguanine (preQ(0)). This is 7-cyano-7-deazaguanine synthase 1 from Colwellia psychrerythraea (strain 34H / ATCC BAA-681) (Vibrio psychroerythus).